We begin with the raw amino-acid sequence, 323 residues long: Transcription factor JunD (323 aa).

2 disordered regions span residues Gln138–Leu173 and Pro197–Pro221. Residues Leu141–Glu167 show a composition bias toward gly residues. Residues Phe198–Pro212 show a composition bias toward pro residues. Positions Arg242–Arg269 are basic motif. The 64-residue stretch at Arg242–His305 folds into the bZIP domain. The interval Leu270 to Leu298 is leucine-zipper.

This sequence belongs to the bZIP family. Jun subfamily. Binds DNA as a dimer.

The protein resides in the nucleus. This Gallus gallus (Chicken) protein is Transcription factor JunD (JUND).